The sequence spans 257 residues: NAD-capped RNA hydrolase NudC (257 aa).

Substrate contacts are provided by lysine 25 and arginine 69. Positions 98 and 101 each coordinate Zn(2+). Glutamate 111 contributes to the substrate binding site. Residues cysteine 116 and cysteine 119 each contribute to the Zn(2+) site. Tyrosine 124 lines the substrate pocket. The Nudix hydrolase domain occupies 125–248 (PQIAPCIIVA…TVARRLIEDT (124 aa)). Alanine 158, glutamate 174, and glutamate 178 together coordinate a divalent metal cation. A Nudix box motif is present at residues 159 to 180 (GFVEVGETLEQAVAREVMEESG). A substrate-binding site is contributed by 192 to 199 (QPWPFPQS). An a divalent metal cation-binding site is contributed by glutamate 219. Residue alanine 241 participates in substrate binding.

This sequence belongs to the Nudix hydrolase family. NudC subfamily. Homodimer. The cofactor is Mg(2+). Mn(2+) serves as cofactor. Zn(2+) is required as a cofactor.

It catalyses the reaction a 5'-end NAD(+)-phospho-ribonucleoside in mRNA + H2O = a 5'-end phospho-adenosine-phospho-ribonucleoside in mRNA + beta-nicotinamide D-ribonucleotide + 2 H(+). It carries out the reaction NAD(+) + H2O = beta-nicotinamide D-ribonucleotide + AMP + 2 H(+). The catalysed reaction is NADH + H2O = reduced beta-nicotinamide D-ribonucleotide + AMP + 2 H(+). Its function is as follows. mRNA decapping enzyme that specifically removes the nicotinamide adenine dinucleotide (NAD) cap from a subset of mRNAs by hydrolyzing the diphosphate linkage to produce nicotinamide mononucleotide (NMN) and 5' monophosphate mRNA. The NAD-cap is present at the 5'-end of some mRNAs and stabilizes RNA against 5'-processing. Has preference for mRNAs with a 5'-end purine. Catalyzes the hydrolysis of a broad range of dinucleotide pyrophosphates. This Shigella flexneri protein is NAD-capped RNA hydrolase NudC.